The primary structure comprises 32 residues: Islet amyloid polypeptide (32 aa).

It belongs to the calcitonin family. Can form homodimers. Interacts with IDE and INS. Interaction with INS inhibits homodimerization and fibril formation.

It localises to the secreted. Amylin/IAPP is a glucoregulatory peptide hormone that plays an important role in the regulation of energy homeostasis. Selectively inhibits insulin-stimulated glucose utilization and glycogen deposition in muscle, while not affecting adipocyte glucose metabolism. IAPP function is mediated by the CALCR-RAMPs (AMYRs) receptor complexes. Amylin can also bind CALCR receptor in the absence of RAMPs, although it is more selective for AMYRs. The polypeptide is Islet amyloid polypeptide (IAPP) (Saguinus oedipus (Cotton-top tamarin)).